Consider the following 92-residue polypeptide: Cell division protein FtsB (92 aa).

Residues 1–3 (MRL) lie on the Cytoplasmic side of the membrane. The helical transmembrane segment at 4–21 (LILILLSVLVLFQYNFWF) threads the bilayer. The Periplasmic portion of the chain corresponds to 22–92 (GSNGFLDYRQ…VFYHIVKESK (71 aa)). A coiled-coil region spans residues 28 to 63 (DYRQNAEKIKENQAENEKLSQRNQRINAEIQGLTKG).

This sequence belongs to the FtsB family. Part of a complex composed of FtsB, FtsL and FtsQ.

The protein localises to the cell inner membrane. Its function is as follows. Essential cell division protein. May link together the upstream cell division proteins, which are predominantly cytoplasmic, with the downstream cell division proteins, which are predominantly periplasmic. This Haemophilus influenzae (strain 86-028NP) protein is Cell division protein FtsB.